The following is a 545-amino-acid chain: MTVNNILWFRHGLRLHDNPSLLEALRNDGTGSESVRLYPIFIFDGESAGTKLVGFNRMKFLLESLADLDRQLREIGGQLYVFKGNAVNVMRRLFEELNIRKLCFEQDCEPIWKARDDAIQNLCRMMDVKCVEKVSHTLWDPQQIIRTNGGIPPLTYQMFLHTVDIIGKPPRPVAAPSFEFVEFGSIPSILAQEVKLQQVRNLSPEDFGIYYEGNPDISHQQWMGGETKALECLGHRLKQEEEAFLGGYFLPTQAKPEFLVPPTSMSAALRFGCLSVRMFYWCVHDLYEKVQANNQYRNPGGQHITGQLIWREYFYTMSVHNPHYAEMEANPICLNIPWYEPKDDSLDRWKEGRTGFPMIDAAMRQLLAEGWLHHILRNITATFLTRGALWISWEAGVQHFLKYLLDADWSVCAGNWMWVSSSAFEKLLDSSSCTSPIALARRLDPKGEYVRRYLPELKNLPTLYVHEPWKAPLDVQKECGCIVGRDYPAPMIDLAAASRANANTMNSIRQKLMERGGSTPPHCRPSDVEEIRNFFWLPEDVVADC.

The 136-residue stretch at 3 to 138 (VNNILWFRHG…KCVEKVSHTL (136 aa)) folds into the Photolyase/cryptochrome alpha/beta domain. FAD-binding positions include arginine 236, serine 264, serine 266, glutamine 307, histidine 374, 406–408 (DAD), cysteine 412, and asparagine 415.

It belongs to the DNA photolyase class-1 family. Interacts with tim and per; promoted by light conditions. FAD serves as cofactor.

The protein resides in the cytoplasm. It localises to the perinuclear region. The protein localises to the nucleus. Blue light-dependent regulator that is the input of the circadian feedback loop. Has no photolyase activity for cyclobutane pyrimidine dimers or 6-4 photoproducts. Regulation of expression by light suggests a role in photoreception for locomotor activity rhythms. Functions, together with per, as a transcriptional repressor required for the oscillation of peripheral circadian clocks and for the correct specification of clock cells. Genes directly activated by the transcription factors Clock (Clk) and cycle (cyc) are repressed by cry. In Aedes aegypti (Yellowfever mosquito), this protein is Cryptochrome-1.